The chain runs to 914 residues: Eukaryotic initiation factor 4F subunit p130 (914 aa).

Pro residues predominate over residues 1–12; the sequence is MTDQRGPPPPHP. Disordered regions lie at residues 1–84, 128–205, 240–351, and 457–535; these read MTDQ…YNNR, PPYT…NEAV, ERKK…VNKS, and IARN…LVPS. Residues 26 to 44 show a composition bias toward polar residues; it reads NQYSGANNSQPNNHYNENL. The span at 59-73 shows a compositional bias: low complexity; that stretch reads KNGKYGTNKYNNRNN. S74 bears the Phosphoserine mark. Over residues 145–155 the composition is skewed to low complexity; that stretch reads PKTTKIEITTK. Over residues 156–195 the composition is skewed to basic and acidic residues; that stretch reads TGERLNLKKFHEEKKASKGEEKNDGVEQKSKSGTPFEKEA. T196 is modified (phosphothreonine). Residues 201–315 form an interaction with PAB1 region; that stretch reads ANEAVKDTLT…TGSVTKSVTF (115 aa). Residues 240–263 are compositionally biased toward basic and acidic residues; it reads ERKKNGLISETEKKQETSNHDNTD. Composition is skewed to polar residues over residues 298 to 325 and 339 to 348; these read SVKTPQHVTGSVTKSVTFNEPENESSSQ and ISDTTGGKTV. A Phosphothreonine modification is found at T301. The segment covering 496–529 has biased composition (basic and acidic residues); that stretch reads RMGDDRRSNRGYTSRKDREKAAEKAEEQAPKEEI. Position 503 is a phosphoserine (S503). The MIF4G domain maps to 567–810; sequence ERKMKSLLNK…IDVKELREIK (244 aa). Residues 833 to 914 are disordered; the sequence is QLRQKKNSQR…ALMNNDGDSD (82 aa). The segment covering 841 to 867 has biased composition (low complexity); sequence QRSNSRFNNHNQSNSNRYSSNRRNMQN. The span at 868-886 shows a compositional bias: polar residues; sequence TQRDSFASTKTGSFRNNQR. The residue at position 913 (S913) is a Phosphoserine.

The protein belongs to the eukaryotic initiation factor 4G family. In terms of assembly, component of the eIF4F complex, which composition varies with external and internal environmental conditions. It is composed of at least eIF4A (TIF1/TIF2), eIF4E (TIF45) and eIF4G (TIF4631 or TIF4632). Interacts with PAT1 in a RNA-dependent manner.

The protein localises to the cytoplasm. In terms of biological role, component of the eIF4F complex, which interacts with the mRNA cap structure and serves as an initial point of assembly for the translation apparatus. Stimulates translation by interaction with polyadenylate-binding protein PAB1, bringing the 5'- and 3'-ends of the mRNA in proximity. The formation of this circular mRNP structure appears to be critical for the synergistic effects of the cap and the poly(A) tail in facilitating translation initiation, recycling of ribosomes, and mRNA stability. TIF4632 is probably essential when TIF4631 is missing. The protein is Eukaryotic initiation factor 4F subunit p130 of Saccharomyces cerevisiae (strain ATCC 204508 / S288c) (Baker's yeast).